We begin with the raw amino-acid sequence, 514 residues long: MNEEQRKASSVDVLAERDKKAEKDYSKYFEHVYQPPNLKEAKKRGKQEVRYNRDFQIDEKYRGMGNERTFLIKTYGCQMNAHDTEVIAGILEALGYQATTDINTADVILINTCAIRENAENKVFSEIGNLKHLKKERPDILIGVCGCMSQEESVVNKILKSYQNVDMIFGTHNIHHLPEILEEAYLSKAMVVEVWSKEGDVIENLPKVREGNIKAWVNIMYGCDKFCTYCIVPFTRGKERSRRPEDIIDEVRELAREGYKEITLLGQNVNSYGKDLQDIEYDLGDLLQAISKIAIPRVRFTTSHPWDFTDHMIDVISEGGNIVPHIHLPVQSGNNAVLKIMGRKYTRESYLDLVKRIKDRIPNVALTTDIIVGYPNESEEQFEETLTLYDEVGFEHAYTYLYSQRDGTPAAKMKDNVPLDVKKERLQRLNKKVGHYSQIAMSKYEGQTVTVLCEGSSKKDDQVLAGYTDKNKLVNFKAPKEMIGKLVEVRIDEAKQYSLNGSFVKEVEPEMVIQ.

Positions 1 to 21 (MNEEQRKASSVDVLAERDKKA) are disordered. The MTTase N-terminal domain maps to 68-186 (RTFLIKTYGC…LPEILEEAYL (119 aa)). [4Fe-4S] cluster is bound by residues cysteine 77, cysteine 113, cysteine 147, cysteine 223, cysteine 227, and cysteine 230. Residues 209 to 440 (REGNIKAWVN…KKVGHYSQIA (232 aa)) form the Radical SAM core domain. The 64-residue stretch at 442 to 505 (SKYEGQTVTV…QYSLNGSFVK (64 aa)) folds into the TRAM domain.

It belongs to the methylthiotransferase family. MiaB subfamily. Monomer. Requires [4Fe-4S] cluster as cofactor.

The protein localises to the cytoplasm. It carries out the reaction N(6)-dimethylallyladenosine(37) in tRNA + (sulfur carrier)-SH + AH2 + 2 S-adenosyl-L-methionine = 2-methylsulfanyl-N(6)-dimethylallyladenosine(37) in tRNA + (sulfur carrier)-H + 5'-deoxyadenosine + L-methionine + A + S-adenosyl-L-homocysteine + 2 H(+). Functionally, catalyzes the methylthiolation of N6-(dimethylallyl)adenosine (i(6)A), leading to the formation of 2-methylthio-N6-(dimethylallyl)adenosine (ms(2)i(6)A) at position 37 in tRNAs that read codons beginning with uridine. The chain is tRNA-2-methylthio-N(6)-dimethylallyladenosine synthase from Staphylococcus aureus (strain MRSA252).